Consider the following 118-residue polypeptide: MRSAKLKFEKRRSRIRHKISKTSNRVRLSIFKSCRHIYAQIIDDSRSITIASASTLDEKITTLKKSYCNIDNAIKVGEAIAKKADSAGIKEVVFDRGGYKYHGVVKALADAAREKIKF.

This sequence belongs to the universal ribosomal protein uL18 family. In terms of assembly, part of the 50S ribosomal subunit; part of the 5S rRNA/L5/L18/L25 subcomplex. Contacts the 5S and 23S rRNAs.

In terms of biological role, this is one of the proteins that bind and probably mediate the attachment of the 5S RNA into the large ribosomal subunit, where it forms part of the central protuberance. The chain is Large ribosomal subunit protein uL18 from Rickettsia akari (strain Hartford).